We begin with the raw amino-acid sequence, 400 residues long: Enoyl-[acyl-carrier-protein] reductase [NADH] (400 aa).

NAD(+)-binding positions include 48 to 53 (GSSSGY), 74 to 75 (FE), 111 to 112 (DA), and 139 to 140 (LA). Y225 provides a ligand contact to substrate. Y235 functions as the Proton donor in the catalytic mechanism. NAD(+) contacts are provided by residues K244 and 273–275 (VVT).

This sequence belongs to the TER reductase family. As to quaternary structure, monomer.

It catalyses the reaction a 2,3-saturated acyl-[ACP] + NAD(+) = a (2E)-enoyl-[ACP] + NADH + H(+). The protein operates within lipid metabolism; fatty acid biosynthesis. Its function is as follows. Involved in the final reduction of the elongation cycle of fatty acid synthesis (FAS II). Catalyzes the reduction of a carbon-carbon double bond in an enoyl moiety that is covalently linked to an acyl carrier protein (ACP). The protein is Enoyl-[acyl-carrier-protein] reductase [NADH] of Shewanella woodyi (strain ATCC 51908 / MS32).